The following is a 201-amino-acid chain: MNHKEILDQLVPIVIEQTPRGERAYDIYSRLLQDRIVLLGSPIDDHVANLIVAQLLFLESQDPDKDIYLYINSPGGSVTAGLAIYDTMQYIKPDVVTICMGQAASMGAILLAAGAPGKRYALPHSRIMIHQPLGGIQGQATDIIIHAEEIKRIKEMLIDILAKHTGQPKDKIANDIERDYFMSPYEAKDYGLIDKVIEKRE.

Residue Ser105 is the Nucleophile of the active site. The active site involves His130.

It belongs to the peptidase S14 family. In terms of assembly, fourteen ClpP subunits assemble into 2 heptameric rings which stack back to back to give a disk-like structure with a central cavity, resembling the structure of eukaryotic proteasomes.

The protein resides in the cytoplasm. The catalysed reaction is Hydrolysis of proteins to small peptides in the presence of ATP and magnesium. alpha-casein is the usual test substrate. In the absence of ATP, only oligopeptides shorter than five residues are hydrolyzed (such as succinyl-Leu-Tyr-|-NHMec, and Leu-Tyr-Leu-|-Tyr-Trp, in which cleavage of the -Tyr-|-Leu- and -Tyr-|-Trp bonds also occurs).. Cleaves peptides in various proteins in a process that requires ATP hydrolysis. Has a chymotrypsin-like activity. Plays a major role in the degradation of misfolded proteins. This Aquifex aeolicus (strain VF5) protein is ATP-dependent Clp protease proteolytic subunit.